The primary structure comprises 238 residues: Probable phosphatase phospho2 (238 aa).

Catalysis depends on D8, which acts as the Nucleophile. Mg(2+) is bound by residues D8 and D10. The active-site Proton donor is the D10. Positions 19 and 99 each coordinate substrate. A Mg(2+)-binding site is contributed by D179.

The protein belongs to the HAD-like hydrolase superfamily. PHOSPHO family. Requires Mg(2+) as cofactor.

In terms of biological role, probable phosphatase. The sequence is that of Probable phosphatase phospho2 (phospho2) from Xenopus tropicalis (Western clawed frog).